Reading from the N-terminus, the 283-residue chain is Light-independent protochlorophyllide reductase iron-sulfur ATP-binding protein (283 aa).

ATP-binding positions include 15 to 20 (GIGKST) and Lys44. Ser19 is a Mg(2+) binding site. [4Fe-4S] cluster-binding residues include Cys100 and Cys134. Position 185-186 (185-186 (NR)) interacts with ATP.

This sequence belongs to the NifH/BchL/ChlL family. In terms of assembly, homodimer. Protochlorophyllide reductase is composed of three subunits; ChlL, ChlN and ChlB. [4Fe-4S] cluster is required as a cofactor.

The enzyme catalyses chlorophyllide a + oxidized 2[4Fe-4S]-[ferredoxin] + 2 ADP + 2 phosphate = protochlorophyllide a + reduced 2[4Fe-4S]-[ferredoxin] + 2 ATP + 2 H2O. Its pathway is porphyrin-containing compound metabolism; chlorophyll biosynthesis (light-independent). Its function is as follows. Component of the dark-operative protochlorophyllide reductase (DPOR) that uses Mg-ATP and reduced ferredoxin to reduce ring D of protochlorophyllide (Pchlide) to form chlorophyllide a (Chlide). This reaction is light-independent. The L component serves as a unique electron donor to the NB-component of the complex, and binds Mg-ATP. The chain is Light-independent protochlorophyllide reductase iron-sulfur ATP-binding protein from Synechococcus sp. (strain JA-2-3B'a(2-13)) (Cyanobacteria bacterium Yellowstone B-Prime).